We begin with the raw amino-acid sequence, 448 residues long: Trigger factor (448 aa).

One can recognise a PPIase FKBP-type domain in the interval 172–257 (GDRVTVDFVG…MKKIEWPHLP (86 aa)).

Belongs to the FKBP-type PPIase family. Tig subfamily.

It is found in the cytoplasm. It catalyses the reaction [protein]-peptidylproline (omega=180) = [protein]-peptidylproline (omega=0). Functionally, involved in protein export. Acts as a chaperone by maintaining the newly synthesized protein in an open conformation. Functions as a peptidyl-prolyl cis-trans isomerase. The sequence is that of Trigger factor from Burkholderia cenocepacia (strain ATCC BAA-245 / DSM 16553 / LMG 16656 / NCTC 13227 / J2315 / CF5610) (Burkholderia cepacia (strain J2315)).